We begin with the raw amino-acid sequence, 406 residues long: Leu/Ile/Val-binding protein homolog 5 (406 aa).

The first 29 residues, 1–29, serve as a signal peptide directing secretion; that stretch reads MIGTRLPAWTRVLACGVAGLSLMTISAKA.

It belongs to the leucine-binding protein family.

Its function is as follows. Component of an amino-acid transport system. This is Leu/Ile/Val-binding protein homolog 5 from Brucella abortus (strain 2308).